An 884-amino-acid chain; its full sequence is MHPFSRLFRNIQSLGEEEVQELLGPPEDALPLLAGEDLNHRVADALNLHLPTADLQWVHKTNAITGLYSNQAAQFNPHWIQPEFPELHLHNDLIQKLQQYFGPLTINEKRKLQLNFPARFFPKATKYFPLIKGIKNNYPNFALEHFFATANYLWTLWEAGILYLRKNQTTLTFKGKPYSWEHRQLVQHNGQQHKSHLQSRQNSSMVACSGHLLHNHLSSESVSVSTRNLSNNISDKSQKSTRTGLCSYKQIQTDRLEHLARISCGSKITIGQQGSSPKTLYKSISSNFRNQTWAYNSSRNSGHTTWFSSASNSNKSRSREKAYSSNSTSKRYSPPLNYEKSDFSSPGVRRRITRLDNNGTPTQCLWRSFYNTKPCGSYCIHHIVSSLDDWGPCTVTGDVTIKSPRTPRRITGGVFLVDKNPNNSSESRLVVDFSQFSRGHTRVHWPKFAVPNLQTLANLLSTNLQWLSLDVSAAFYHIPISPAAVPHLLVGSPGLERFNTCLSSSTHNRNNSQLQTMHNLCTRHVYSSLLLLFKTYGRKLHLLAHPFIMGFRKLPMGVGLSPFLLAQFTSALASMVRRNFPHCVVFAYMDDLVLGARTSEHLTAIYSHICSVFLDLGIHLNVNKTKWWGNHLHFMGYVITSSGVLPQDKHVKKISRYLRSVPVNQPLDYKICERLTGILNYVAPFTLCGYAALMPLYHAITSRTAFIFSSLYKSWLLSLYEELWPVVRQRGVVCTVFADATPTGWGIATTYQLLSGTFAFPLPIATAELIAACLARCWTGARLLGTDNSVVLSGKLTSFPWLLACVANWILRGTSFCYVPSALNPADLPSRGLLPVLRPLPRLRLRPQTSRISLWAASPPVSPRRPVRVAWSSPVQNCEPWIPP.

Residues 1–184 (MHPFSRLFRN…GKPYSWEHRQ (184 aa)) are terminal protein domain (TP). Residues 185–387 (LVQHNGQQHK…YCIHHIVSSL (203 aa)) are spacer. A disordered region spans residues 299-345 (RNSGHTTWFSSASNSNKSRSREKAYSSNSTSKRYSPPLNYEKSDFSS). Residues 388–729 (DDWGPCTVTG…YEELWPVVRQ (342 aa)) form a polymerase/reverse transcriptase domain (RT) region. The Reverse transcriptase domain occupies 398 to 639 (DVTIKSPRTP…NHLHFMGYVI (242 aa)). D470, D590, and D591 together coordinate Mg(2+).

The protein belongs to the hepadnaviridae P protein family.

It carries out the reaction DNA(n) + a 2'-deoxyribonucleoside 5'-triphosphate = DNA(n+1) + diphosphate. It catalyses the reaction Endonucleolytic cleavage to 5'-phosphomonoester.. With respect to regulation, activated by host HSP70 and HSP40 in vitro to be able to bind the epsilon loop of the pgRNA. Because deletion of the RNase H region renders the protein partly chaperone-independent, the chaperones may be needed indirectly to relieve occlusion of the RNA-binding site by this domain. Inhibited by several reverse-transcriptase inhibitors: Lamivudine, Adefovir and Entecavir. Its function is as follows. Multifunctional enzyme that converts the viral RNA genome into dsDNA in viral cytoplasmic capsids. This enzyme displays a DNA polymerase activity that can copy either DNA or RNA templates, and a ribonuclease H (RNase H) activity that cleaves the RNA strand of RNA-DNA heteroduplexes in a partially processive 3'- to 5'-endonucleasic mode. Neo-synthesized pregenomic RNA (pgRNA) are encapsidated together with the P protein, and reverse-transcribed inside the nucleocapsid. Initiation of reverse-transcription occurs first by binding the epsilon loop on the pgRNA genome, and is initiated by protein priming, thereby the 5'-end of (-)DNA is covalently linked to P protein. Partial (+)DNA is synthesized from the (-)DNA template and generates the relaxed circular DNA (RC-DNA) genome. After budding and infection, the RC-DNA migrates in the nucleus, and is converted into a plasmid-like covalently closed circular DNA (cccDNA). The activity of P protein does not seem to be necessary for cccDNA generation, and is presumably released from (+)DNA by host nuclear DNA repair machinery. This is Protein P from Woodchuck hepatitis B virus (isolate 7) (WHV).